A 339-amino-acid polypeptide reads, in one-letter code: Adenylosuccinate synthetase (339 aa).

Residues 12–18 and 42–44 contribute to the GTP site; these read GDEGKGS and GHS. Aspartate 13 serves as the catalytic Proton acceptor. The Mg(2+) site is built by aspartate 13 and glycine 42. IMP-binding positions include 13 to 16, 40 to 43, threonine 127, arginine 141, glutamine 179, threonine 194, and arginine 256; these read DEGK and NAGH. Histidine 43 (proton donor) is an active-site residue. Position 252-258 (252-258) interacts with substrate; that stretch reads TVTGRRR. Residues arginine 258, 284–286, and 324–326 contribute to the GTP site; these read MLD and KTG.

The protein belongs to the adenylosuccinate synthetase family. Homodimer. Mg(2+) is required as a cofactor.

The protein resides in the cytoplasm. It carries out the reaction IMP + L-aspartate + GTP = N(6)-(1,2-dicarboxyethyl)-AMP + GDP + phosphate + 2 H(+). Its pathway is purine metabolism; AMP biosynthesis via de novo pathway; AMP from IMP: step 1/2. In terms of biological role, plays an important role in the de novo pathway of purine nucleotide biosynthesis. Catalyzes the first committed step in the biosynthesis of AMP from IMP. The sequence is that of Adenylosuccinate synthetase from Thermococcus onnurineus (strain NA1).